The primary structure comprises 158 residues: UPF0225 protein Pfl01_1218 (158 aa).

This sequence belongs to the UPF0225 family.

In Pseudomonas fluorescens (strain Pf0-1), this protein is UPF0225 protein Pfl01_1218.